A 167-amino-acid polypeptide reads, in one-letter code: Lipoprotein signal peptidase (167 aa).

3 helical membrane-spanning segments follow: residues 8–28 (FFLL…YWIM), 61–81 (FSHW…LWLW), and 93–113 (FGLT…ICFY). Residues D117 and D136 contribute to the active site. Residues 126–146 (IFYFAVFNLADTFITLGVIAI) traverse the membrane as a helical segment.

This sequence belongs to the peptidase A8 family.

Its subcellular location is the cell inner membrane. It carries out the reaction Release of signal peptides from bacterial membrane prolipoproteins. Hydrolyzes -Xaa-Yaa-Zaa-|-(S,diacylglyceryl)Cys-, in which Xaa is hydrophobic (preferably Leu), and Yaa (Ala or Ser) and Zaa (Gly or Ala) have small, neutral side chains.. It participates in protein modification; lipoprotein biosynthesis (signal peptide cleavage). In terms of biological role, this protein specifically catalyzes the removal of signal peptides from prolipoproteins. This is Lipoprotein signal peptidase from Bartonella quintana (strain Toulouse) (Rochalimaea quintana).